The sequence spans 222 residues: PKHD-type hydroxylase Syncc9605_1577 (222 aa).

A Fe2OG dioxygenase domain is found at lysine 80–serine 175. Residues histidine 98, aspartate 100, and histidine 156 each contribute to the Fe cation site. Arginine 166 is a binding site for 2-oxoglutarate.

Fe(2+) is required as a cofactor. L-ascorbate serves as cofactor.

This chain is PKHD-type hydroxylase Syncc9605_1577, found in Synechococcus sp. (strain CC9605).